The following is a 402-amino-acid chain: Prostaglandin E2 receptor EP1 subtype (402 aa).

Residues 1-35 lie on the Extracellular side of the membrane; that stretch reads MSPCGPLNLSLAGEATTCAAPWVPNTSAVPPSGAS. N-linked (GlcNAc...) asparagine glycosylation is found at Asn8 and Asn25. The helical transmembrane segment at 36–62 threads the bilayer; the sequence is PALPIFSMTLGAVSNLLALALLAQAAG. Topologically, residues 63–72 are cytoplasmic; sequence RLRRRRSAAT. A helical transmembrane segment spans residues 73–96; the sequence is FLLFVASLLATDLAGHVIPGALVL. Over 97-111 the chain is Extracellular; sequence RLYTAGRAPAGGACH. Cys110 and Cys188 are oxidised to a cystine. The helical transmembrane segment at 112–133 threads the bilayer; it reads FLGGCMVFFGLCPLLLGCGMAV. Residues 134-155 are Cytoplasmic-facing; that stretch reads ERCVGVTRPLLHAARVSVARAR. Residues 156–177 traverse the membrane as a helical segment; sequence LALAAVAAVALAVALLPLARVG. Residues 178–201 lie on the Extracellular side of the membrane; that stretch reads RYELQYPGTWCFIGLGPPGGWRQA. The chain crosses the membrane as a helical span at residues 202–227; it reads LLAGLFASLGLVALLAALVCNTLSGL. Residues 228 to 294 are Cytoplasmic-facing; that stretch reads ALLRARWRRR…ARRARAHDVE (67 aa). The interval 238–266 is disordered; it reads SRRPPPASGPDSRRRWGAHGPRSASASSA. Residues 295-321 traverse the membrane as a helical segment; that stretch reads MVGQLVGIMVVSCICWSPMLVLVALAV. Over 322–332 the chain is Extracellular; sequence GGWSSTSLQRP. A helical membrane pass occupies residues 333–354; sequence LFLAVRLASWNQILDPWVYILL. At 355 to 402 the chain is on the cytoplasmic side; the sequence is RQAVLRQLLRLLPPRAGAKGGPAGLGLTPSAWEASSLRSSRHSGLSHF.

This sequence belongs to the G-protein coupled receptor 1 family. Phosphorylated. Abundant in kidney. Lower level expression in lung, skeletal muscle and spleen, lowest expression in testis and not detected in liver brain and heart.

It is found in the cell membrane. Its function is as follows. Receptor for prostaglandin E2 (PGE2). The activity of this receptor is mediated by G(q) proteins which activate a phosphatidylinositol-calcium second messenger system. May play a role as an important modulator of renal function. Implicated the smooth muscle contractile response to PGE2 in various tissues. The sequence is that of Prostaglandin E2 receptor EP1 subtype (PTGER1) from Homo sapiens (Human).